A 260-amino-acid chain; its full sequence is BTB/POZ domain-containing protein KCTD21 (260 aa).

A BTB domain is found at 3–72; that stretch reads DPITLNVGGK…LRTSHLDLPE (70 aa). Residues 88 to 112 are a coiled coil; it reads QVQPLIEALQEKEVELSKAEKNAML.

Homopentamer. Interacts with KCTD11; KCTD21 and KCTD11 may associate in pentameric assemblies. Interacts (via BTB domain) with CUL3; indicative for a participation in a BCR (BTB-CUL3-RBX1) E3 ubiquitin-protein ligase complex. In terms of tissue distribution, highly expressed in cerebellum and brain. Expressed in adult cerebellum (at protein level).

It participates in protein modification; protein ubiquitination. Functionally, probable substrate-specific adapter of a BCR (BTB-CUL3-RBX1) E3 ubiquitin-protein ligase complex mediating the ubiquitination and subsequent proteasomal degradation of target proteins. Promotes the ubiquitination of HDAC1. Can function as antagonist of the Hedgehog pathway by affecting the nuclear transfer of transcription factor GLI1; the function probably occurs via HDAC1 down-regulation, keeping GLI1 acetylated and inactive. Inhibits cell growth and tumorigenicity of medulloblastoma (MDB). The chain is BTB/POZ domain-containing protein KCTD21 (Kctd21) from Mus musculus (Mouse).